Reading from the N-terminus, the 372-residue chain is DNA replication and repair protein RecF (372 aa).

Residue 30-37 (GENGQGKT) coordinates ATP.

The protein belongs to the RecF family.

The protein resides in the cytoplasm. Its function is as follows. The RecF protein is involved in DNA metabolism; it is required for DNA replication and normal SOS inducibility. RecF binds preferentially to single-stranded, linear DNA. It also seems to bind ATP. The polypeptide is DNA replication and repair protein RecF (Anaeromyxobacter dehalogenans (strain 2CP-1 / ATCC BAA-258)).